The primary structure comprises 353 residues: Terpene synthase 3 (353 aa).

The Mg(2+) site is built by aspartate 118, asparagine 261, and glutamate 269. The short motif at 118–122 (DDLLE) is the D(D/E)XX(D/E) motif element. Residues 261–269 (NDTFLLKKE) carry the NSE motif motif. Residues 342 to 349 (WCSKTTRY) carry the WxxxxxRY motif motif.

Belongs to the terpene synthase family. Mg(2+) serves as cofactor.

In terms of biological role, terpene synthase that may be involved in the production of volatile terpenoids. Does not show detectable terpene products with either farnesyl diphosphate (FPP) or geranyl diphosphate (GPP). P.polycephalum has a unique biology and these volatile terpenoids could function in internal communication of P.polycephalum, to mark the territory that have been explored, or they may be involved in chemotaxis. This chain is Terpene synthase 3, found in Physarum polycephalum (Slime mold).